The sequence spans 343 residues: CRISPR-associated endonuclease Cas1 1 (343 aa).

Residues E166, H234, and E249 each contribute to the Mn(2+) site.

Belongs to the CRISPR-associated endonuclease Cas1 family. In terms of assembly, homodimer, forms a heterotetramer with a Cas2 homodimer. Mg(2+) serves as cofactor. It depends on Mn(2+) as a cofactor.

CRISPR (clustered regularly interspaced short palindromic repeat), is an adaptive immune system that provides protection against mobile genetic elements (viruses, transposable elements and conjugative plasmids). CRISPR clusters contain spacers, sequences complementary to antecedent mobile elements, and target invading nucleic acids. CRISPR clusters are transcribed and processed into CRISPR RNA (crRNA). Acts as a dsDNA endonuclease. Involved in the integration of spacer DNA into the CRISPR cassette. In Moorella thermoacetica (strain ATCC 39073 / JCM 9320), this protein is CRISPR-associated endonuclease Cas1 1.